A 283-amino-acid chain; its full sequence is ATP phosphoribosyltransferase (283 aa).

This sequence belongs to the ATP phosphoribosyltransferase family. Long subfamily. Requires Mg(2+) as cofactor.

The protein localises to the cytoplasm. The catalysed reaction is 1-(5-phospho-beta-D-ribosyl)-ATP + diphosphate = 5-phospho-alpha-D-ribose 1-diphosphate + ATP. It functions in the pathway amino-acid biosynthesis; L-histidine biosynthesis; L-histidine from 5-phospho-alpha-D-ribose 1-diphosphate: step 1/9. Its activity is regulated as follows. Feedback inhibited by histidine. Functionally, catalyzes the condensation of ATP and 5-phosphoribose 1-diphosphate to form N'-(5'-phosphoribosyl)-ATP (PR-ATP). Has a crucial role in the pathway because the rate of histidine biosynthesis seems to be controlled primarily by regulation of HisG enzymatic activity. The sequence is that of ATP phosphoribosyltransferase from Rhodococcus jostii (strain RHA1).